A 502-amino-acid polypeptide reads, in one-letter code: 4,4'-diapophytoene desaturase (4,4'-diaponeurosporene-forming) (502 aa).

Position 5–17 (5–17 (VIGAGVTGLAAAA)) interacts with FAD.

It belongs to the carotenoid/retinoid oxidoreductase family. CrtN subfamily.

It catalyses the reaction 15-cis-4,4'-diapophytoene + 3 FAD + 3 H(+) = all-trans-4,4'-diaponeurosporene + 3 FADH2. Its pathway is carotenoid biosynthesis; staphyloxanthin biosynthesis; staphyloxanthin from farnesyl diphosphate: step 2/5. In terms of biological role, involved in the biosynthesis of the yellow-orange carotenoid staphyloxanthin, which plays a role in the virulence via its protective function against oxidative stress. Catalyzes three successive dehydrogenation reactions that lead to the introduction of three double bonds into 4,4'-diapophytoene (dehydrosqualene), with 4,4'-diapophytofluene and 4,4'-diapo-zeta-carotene as intermediates, and 4,4'-diaponeurosporene (the major deep-yellow pigment in staphylococci strains) as the end product. This is 4,4'-diapophytoene desaturase (4,4'-diaponeurosporene-forming) from Staphylococcus aureus (strain USA300).